Here is a 201-residue protein sequence, read N- to C-terminus: Coiled-coil domain-containing protein 195 (201 aa).

A coiled-coil region spans residues 4–38; sequence DIQLMRLIQEMRAEIHKLEKENQALRMKLTASSQR. Disordered regions lie at residues 28-72 and 179-201; these read LRMK…DAAP and SKNS…IIAE. Low complexity predominate over residues 179 to 188; that stretch reads SKNSSSLKHS. Residues 189–201 show a composition bias toward polar residues; that stretch reads PNQATNQLSIIAE.

This chain is Coiled-coil domain-containing protein 195, found in Homo sapiens (Human).